The chain runs to 109 residues: Transcription initiation factor IIA subunit 2 (109 aa).

It belongs to the TFIIA subunit 2 family. As to quaternary structure, TFIIA is a heterodimer of the large unprocessed subunit 1 and a small subunit gamma. It was originally believed to be a heterotrimer of an alpha (p35), a beta (p19) and a gamma subunit (p12). Interacts with NCOA6 general coactivator. TFIIA forms a complex with TBP. Interacts with HSF1 (via transactivation domain). Part of TBP-based Pol II pre-initiation complex (PIC), in which Pol II core assembles with general transcription factors and other specific initiation factors including GTF2E1, GTF2E2, GTF2F1, GTF2F2, TCEA1, ERCC2, ERCC3, GTF2H2, GTF2H3, GTF2H4, GTF2H5, GTF2A1, GTF2A2, GTF2B and TBP; this large multi-subunit PIC complex mediates DNA unwinding and targets Pol II core to the transcription start site where the first phosphodiester bond forms.

Its subcellular location is the nucleus. Its function is as follows. TFIIA is a component of the transcription machinery of RNA polymerase II and plays an important role in transcriptional activation. TFIIA in a complex with TBP mediates transcriptional activity. The sequence is that of Transcription initiation factor IIA subunit 2 (Gtf2a2) from Rattus norvegicus (Rat).